A 210-amino-acid polypeptide reads, in one-letter code: Large ribosomal subunit protein uL4 (210 aa).

It belongs to the universal ribosomal protein uL4 family. As to quaternary structure, part of the 50S ribosomal subunit.

In terms of biological role, one of the primary rRNA binding proteins, this protein initially binds near the 5'-end of the 23S rRNA. It is important during the early stages of 50S assembly. It makes multiple contacts with different domains of the 23S rRNA in the assembled 50S subunit and ribosome. Functionally, forms part of the polypeptide exit tunnel. In Orientia tsutsugamushi (strain Boryong) (Rickettsia tsutsugamushi), this protein is Large ribosomal subunit protein uL4.